The sequence spans 136 residues: Histone H2A (136 aa).

Positions 1-11 (MSSGGKSGGKA) are enriched in gly residues. Positions 1–24 (MSSGGKSGGKAGDASSKAQSRSAK) are disordered. An N6-acetyllysine mark is found at K6 and K10. Residues 12-24 (GDASSKAQSRSAK) show a composition bias toward low complexity. Residue Q108 is modified to N5-methylglutamine. S133 carries the post-translational modification Phosphoserine. Positions 133-134 (SQ) match the [ST]-Q motif motif.

Belongs to the histone H2A family. The nucleosome is a histone octamer containing two molecules each of H2A, H2B, H3 and H4 assembled in one H3-H4 heterotetramer and two H2A-H2B heterodimers. The octamer wraps approximately 147 bp of DNA. Post-translationally, phosphorylated to form H2AS128ph (gamma-H2A) in response to DNA double-strand breaks (DSBs) generated by exogenous genotoxic agents and by stalled replication forks. Phosphorylation is dependent on the DNA damage checkpoint kinases MEC1/ATR and TEL1/ATM, spreads on either side of a detected DSB site and may mark the surrounding chromatin for recruitment of proteins required for DNA damage signaling and repair. Gamma-H2A is removed from the DNA prior to the strand invasion-primer extension step of the repair process and subsequently dephosphorylated. Dephosphorylation is necessary for efficient recovery from the DNA damage checkpoint. In terms of processing, acetylated by ESA1 to form H2AK4ac and H2AK7ac.

It is found in the nucleus. The protein resides in the chromosome. Its function is as follows. Core component of nucleosome which plays a central role in DNA double strand break (DSB) repair. Nucleosomes wrap and compact DNA into chromatin, limiting DNA accessibility to the cellular machineries which require DNA as a template. Histones thereby play a central role in transcription regulation, DNA repair, DNA replication and chromosomal stability. DNA accessibility is regulated via a complex set of post-translational modifications of histones, also called histone code, and nucleosome remodeling. The sequence is that of Histone H2A (HTA1) from Mycosarcoma maydis (Corn smut fungus).